Consider the following 240-residue polypeptide: DNA repair protein RecO (240 aa).

It belongs to the RecO family.

Its function is as follows. Involved in DNA repair and RecF pathway recombination. In Xanthomonas euvesicatoria pv. vesicatoria (strain 85-10) (Xanthomonas campestris pv. vesicatoria), this protein is DNA repair protein RecO.